Reading from the N-terminus, the 1714-residue chain is Protein ESSENTIAL FOR POTEXVIRUS ACCUMULATION 1 (1714 aa).

2 disordered regions span residues 1–296 and 358–511; these read MANS…PPHL and IVSS…SKGE. Ser-39 is subject to Phosphoserine. Residues 58–75 show a composition bias toward polar residues; it reads DPNQYGNHSDVVRTTGNG. 2 stretches are compositionally biased toward basic and acidic residues: residues 96-136 and 143-203; these read ESGR…DRWD and GEQR…REKG. 2 stretches are compositionally biased toward polar residues: residues 230 to 244 and 268 to 278; these read HNQS…SFSH and IFTSAPNQSHP. Basic and acidic residues-rich tracts occupy residues 389 to 422 and 430 to 441; these read GSRE…EASH and RGNEAPVRELKE. Residues 444–463 show a composition bias toward polar residues; the sequence is MQGNAHVQSASPWRQSSGGE. Over residues 464–483 the composition is skewed to basic and acidic residues; the sequence is RSNRNSHDWNDPSADSRLKS. A GYF domain is found at 546–597; that stretch reads ELSLYYKDPQGLIQGPFSGSDIIGWFEAGYFGIDLLVRLASAPNDSPFSLLG. Disordered stretches follow at residues 728–753, 1092–1205, and 1437–1566; these read ESAN…PSSD, VKNN…KPAP, and QEKM…GKKE. Positions 737-753 are enriched in polar residues; the sequence is ENVSENAQQPTRSPSSD. Residues 1142–1162 show a composition bias toward basic and acidic residues; sequence SEIKGKTKKSADTLIDNDTHL. The segment covering 1163–1180 has biased composition (polar residues); the sequence is IKSSTATASNTSQMSSEV. A compositionally biased stretch (low complexity) spans 1467–1488; sequence ASWSRSASSPSQAVSQSSSQSK. Over residues 1515 to 1544 the composition is skewed to polar residues; it reads LTSQNSWGTKNTPGKVNAGTSLNRQKSVSM.

In terms of assembly, associates with eIF4E initiation factors and the ribosome complex, thus likely contributing to the proper translation of target proteins. Interacts directly with RPL18B and eIF4E1. Binds to SMG7. In terms of processing, quickly phosphorylated at Ser-39 after treatment of seedlings with the pathogen-associated molecular pattern (PAMP) flg22. As to expression, expressed in all tissues, mostly in flowers, leaves and stems, and, to a lower extent, in roots (at protein level).

It localises to the cytoplasm. Its subcellular location is the cytosol. The protein resides in the P-body. In terms of biological role, translational repressor involved in the negative regulation of immune receptor accumulation via the inhibition of nucleotide-binding leucine-rich repeat (NLR) receptor mediated defense. Represses NLR protein accumulation (e.g. SNC1, RPS4, RPM1 and RPS2). Together with SMG7, helps to restrict effector-triggered immunity (ETI) cell death induction during pathogen infection in a salicylic acid- (SA) and reactive oxygen species- (ROS) independent manner. Required for pathogen-associated molecular pattern (PAMP)-induced suppression of necrotrophic fungal (e.g. F.moniliforme) pathogen-derived mycotoxin-triggered (e.g. fumonisin B1) cell death. Functionally, (Microbial infection) Required for early steps of plantago asiatica mosaic virus (PlAMV, genus Potexvirus) infection. Facilitates pathogenic growth of avirulent hemi-biotrophic bacteria P.syringae pv. tomato (Pst) DC3000 (e.g. AvrRps4 and AvrRpm1) and of the compatible oomycete H.arabidopsidis Noco2. The protein is Protein ESSENTIAL FOR POTEXVIRUS ACCUMULATION 1 of Arabidopsis thaliana (Mouse-ear cress).